Reading from the N-terminus, the 143-residue chain is MSIIKEFKEFAVKGNVMDLAVGVIIGGAFSKIVDSVVKDLIMPVIGVLTGGLDFSNKFVLLGTIPPTFKGNPDSFKDLQAAGVAAFGYGSFITVAINFVILAFIIFLMVKFINKLRKPEEAAPAATPEDIVLLREIRDSLKQR.

The next 2 membrane-spanning stretches (helical) occupy residues 10–30 (FAVKGNVMDLAVGVIIGGAFS) and 89–109 (GSFITVAINFVILAFIIFLMV).

This sequence belongs to the MscL family. Homopentamer.

It is found in the cell inner membrane. Functionally, channel that opens in response to stretch forces in the membrane lipid bilayer. May participate in the regulation of osmotic pressure changes within the cell. The sequence is that of Large-conductance mechanosensitive channel from Burkholderia ambifaria (strain ATCC BAA-244 / DSM 16087 / CCUG 44356 / LMG 19182 / AMMD) (Burkholderia cepacia (strain AMMD)).